We begin with the raw amino-acid sequence, 172 residues long: Large ribosomal subunit protein uL10 (172 aa).

This sequence belongs to the universal ribosomal protein uL10 family. As to quaternary structure, part of the ribosomal stalk of the 50S ribosomal subunit. The N-terminus interacts with L11 and the large rRNA to form the base of the stalk. The C-terminus forms an elongated spine to which L12 dimers bind in a sequential fashion forming a multimeric L10(L12)X complex.

Its function is as follows. Forms part of the ribosomal stalk, playing a central role in the interaction of the ribosome with GTP-bound translation factors. The sequence is that of Large ribosomal subunit protein uL10 from Chlorobium limicola (strain DSM 245 / NBRC 103803 / 6330).